The primary structure comprises 398 residues: Acetate kinase (398 aa).

Asparagine 10 is a binding site for Mg(2+). Lysine 17 provides a ligand contact to ATP. A substrate-binding site is contributed by arginine 91. Aspartate 148 acts as the Proton donor/acceptor in catalysis. ATP contacts are provided by residues 208–212 (HLGNG), 283–285 (DCR), and 331–335 (GIGEN). A Mg(2+)-binding site is contributed by glutamate 385.

This sequence belongs to the acetokinase family. In terms of assembly, homodimer. The cofactor is Mg(2+). Mn(2+) serves as cofactor.

It is found in the cytoplasm. The enzyme catalyses acetate + ATP = acetyl phosphate + ADP. It participates in metabolic intermediate biosynthesis; acetyl-CoA biosynthesis; acetyl-CoA from acetate: step 1/2. Functionally, catalyzes the formation of acetyl phosphate from acetate and ATP. Can also catalyze the reverse reaction. The chain is Acetate kinase from Shewanella loihica (strain ATCC BAA-1088 / PV-4).